The chain runs to 794 residues: MGRSPASSCLRLISCSGGDDTSADPNSTALENKSSGDKRGWSFRKKSGKQRGLITSVVSETTPASRTRETLESALLKSPSPDNNNVSEKQQQSFSVDEKKSQLPVVTYVAEPVDEKKTQSVIEEKTELLSVEEQIDHRTEVSPVIVESKGTETEEDDLIGTELQGPSAADAAKIEEDVTSEVEMASKVEPEESESDDVIIVRKESDEKVDEKLDESVIVVIQAAVRGFLARRELLRSKKVIKLQAAVRGHLVRSQAMGSLRCVQAIVKMQAMVRARHSTKDGSRVSATSDKSEPNAAAQKLLENKFAKHLMESTPKTKPINIKCDPTKPSSAWNWLERWMSVPKPEKTSKANLTTEEQNLEETQNVKISPQADFVNSDSTVENKTETDMPSYEASKVEGQNVELSETEKMSQYDSPEASAEVYYDSIQSQPLAAKPDSLLEEPEYVDGQIKHSLKRKVSNPSFIAAQSKFEELTSSTGSNKAMTLSSKDDVLGEEGKTDIDSPDTTNTIKDHSLEDVTPAELSGSECGTELSVTSSLDTLEKKSDAEGAEPRVEAKLLEDDTFKTDQAELIEIDVKDATSMGTVEDPKEKVENAKDEVEISATHHEPVISTPDSKKRRAEDESGPQAYALSEGALTPMTITESQATPASQASSSVKARKGKSEKSGSSQKRKVSKKITSSPKQEIGTGEATEQEEGKEQKSGRRTSFGYDQEARESSGGKNSLPRFMQPTQSAKAKVQEHNSPRSSPDLQERDVVSAKKRHSLPGVTNGKQVSPRIQRSASQAQQGTKDRKWQR.

A disordered region spans residues 15–101 (CSGGDDTSAD…QSFSVDEKKS (87 aa)). Composition is skewed to polar residues over residues 23-33 (ADPNSTALENK) and 56-65 (SVVSETTPAS). 5 positions are modified to phosphoserine: S78, S80, S142, S193, and S195. The span at 80 to 95 (SPDNNNVSEKQQQSFS) shows a compositional bias: polar residues. IQ domains are found at residues 214-242 (DESV…KVIK) and 243-265 (LQAA…CVQA). The interval 230–241 (ARRELLRSKKVI) is calmodulin-binding. A disordered region spans residues 277–296 (HSTKDGSRVSATSDKSEPNA). At S369 the chain carries Phosphoserine. Residues 375-417 (VNSDSTVENKTETDMPSYEASKVEGQNVELSETEKMSQYDSPE) form a disordered region. S459 carries the phosphoserine modification. Disordered stretches follow at residues 472 to 555 (ELTS…RVEA) and 578 to 794 (ATSM…KWQR). A compositionally biased stretch (polar residues) spans 473 to 486 (LTSSTGSNKAMTLS). Residues 487–500 (SKDDVLGEEGKTDI) are compositionally biased toward basic and acidic residues. Phosphoserine occurs at positions 502 and 544. Basic and acidic residues-rich tracts occupy residues 539-555 (TLEK…RVEA) and 585-607 (EDPK…HHEP). A compositionally biased stretch (low complexity) spans 643 to 654 (SQATPASQASSS). A Nuclear localization signal motif is present at residues 657 to 664 (ARKGKSEK). Over residues 768-786 (NGKQVSPRIQRSASQAQQG) the composition is skewed to polar residues.

The protein belongs to the IQD family. In terms of assembly, binds to multiple calmodulin (CaM) in the presence of Ca(2+) and CaM-like proteins.

It is found in the nucleus. The protein localises to the cytoplasm. Its subcellular location is the cytoskeleton. Its function is as follows. May be involved in cooperative interactions with calmodulins or calmodulin-like proteins. Recruits calmodulin proteins to microtubules, thus being a potential scaffold in cellular signaling and trafficking. May associate with nucleic acids and regulate gene expression at the transcriptional or post-transcriptional level. The sequence is that of Protein IQ-DOMAIN 32 from Arabidopsis thaliana (Mouse-ear cress).